The following is a 221-amino-acid chain: Ribosome maturation factor RimM (221 aa).

Residues 1–23 (MTERKQGAAAPRPLNRPQGESPK) are disordered. Residues 144 to 221 (ENEFYWVDLI…RIVVDWGLDY (78 aa)) form the PRC barrel domain.

The protein belongs to the RimM family. Binds ribosomal protein uS19.

It localises to the cytoplasm. In terms of biological role, an accessory protein needed during the final step in the assembly of 30S ribosomal subunit, possibly for assembly of the head region. Essential for efficient processing of 16S rRNA. May be needed both before and after RbfA during the maturation of 16S rRNA. It has affinity for free ribosomal 30S subunits but not for 70S ribosomes. This Cupriavidus pinatubonensis (strain JMP 134 / LMG 1197) (Cupriavidus necator (strain JMP 134)) protein is Ribosome maturation factor RimM.